An 803-amino-acid chain; its full sequence is Ribonuclease II, chloroplastic/mitochondrial (803 aa).

The N-terminal 35 residues, 1 to 35 (MMSVRAINGCSIIRTATSAGGPPVSLFRHRIQRLR), are a transit peptide targeting the chloroplast and mitochondrion. The RNB domain occupies 399-694 (RIDLTHLKVY…AHYQIKAFLR (296 aa)).

The protein belongs to the RNR ribonuclease family. As to expression, expressed in seedlings, roots, leaves and flowers.

It is found in the mitochondrion. The protein resides in the plastid. It localises to the chloroplast. It carries out the reaction Exonucleolytic cleavage in the 3'- to 5'-direction to yield nucleoside 5'-phosphates.. Functionally, 3'-5' exoribonuclease that catalyzes 3' maturation of chloroplast and mitochondrion ribosomal RNAs; degrades short nucleotidic extensions to generate the mature 3'-ends. Involved in the maturation of 23S, 16S and 5S rRNAs. The protein is Ribonuclease II, chloroplastic/mitochondrial (RNR1) of Arabidopsis thaliana (Mouse-ear cress).